A 396-amino-acid chain; its full sequence is Cathepsin E (396 aa).

Residues 1-19 (MKTLLLLLLVLLELGEAQG) form the signal peptide. Positions 20 to 53 (SLHRVPLRRHPSLKKKLRARSQLSEFWKSHNLDM) are cleaved as a propeptide — activation peptide. The region spanning 78-396 (YFGTISIGSP…NRVGLAPAVP (319 aa)) is the Peptidase A1 domain. N-linked (GlcNAc...) asparagine glycosylation is present at Asn90. Asp96 is an active-site residue. Disulfide bonds link Cys109/Cys114 and Cys272/Cys276. Asp281 is a catalytic residue. Cys314 and Cys351 are joined by a disulfide.

The protein belongs to the peptidase A1 family. As to quaternary structure, homodimer; disulfide-linked. Glycosylated. The nature of the carbohydrate chain varies between cell types. In fibroblasts, the proenzyme contains a high mannose-type oligosaccharide, while the mature enzyme contains a complex-type oligosaccharide. In erythrocyte membranes, both the proenzyme and mature enzyme contain a complex-type oligosaccharide. In terms of processing, two forms are produced by autocatalytic cleavage, form I begins at Ile-54, form II begins at Thr-57. Expressed abundantly in the stomach, the Clara cells of the lung and activated B-lymphocytes, and at lower levels in lymph nodes, skin and spleen. Not expressed in resting B-lymphocytes.

The protein localises to the endosome. The catalysed reaction is Similar to cathepsin D, but slightly broader specificity.. May have a role in immune function. Probably involved in the processing of antigenic peptides during MHC class II-mediated antigen presentation. May play a role in activation-induced lymphocyte depletion in the thymus, and in neuronal degeneration and glial cell activation in the brain. The protein is Cathepsin E (CTSE) of Homo sapiens (Human).